Reading from the N-terminus, the 190-residue chain is Heme-binding protein 1 (190 aa).

It belongs to the HEBP family. As to quaternary structure, monomer.

It is found in the cytoplasm. In terms of biological role, may bind free porphyrinogens that may be present in the cell and thus facilitate removal of these potentially toxic compound. Binds with a high affinity to one molecule of heme or porphyrins. It binds metalloporphyrins, free porphyrins and N-methylprotoporphyrin with similar affinities. This chain is Heme-binding protein 1 (hebp1), found in Xenopus laevis (African clawed frog).